Here is a 404-residue protein sequence, read N- to C-terminus: LL-diaminopimelate aminotransferase (404 aa).

Positions 15 and 42 each coordinate substrate. Pyridoxal 5'-phosphate-binding positions include Tyr72, 108 to 109 (AK), Tyr132, Asn188, Tyr219, and 247 to 249 (SFS). Substrate-binding residues include Lys109, Tyr132, and Asn188. An N6-(pyridoxal phosphate)lysine modification is found at Lys250. Positions 258 and 288 each coordinate pyridoxal 5'-phosphate. Residues Asn288 and Arg384 each coordinate substrate.

It belongs to the class-I pyridoxal-phosphate-dependent aminotransferase family. LL-diaminopimelate aminotransferase subfamily. Homodimer. Pyridoxal 5'-phosphate serves as cofactor.

The enzyme catalyses (2S,6S)-2,6-diaminopimelate + 2-oxoglutarate = (S)-2,3,4,5-tetrahydrodipicolinate + L-glutamate + H2O + H(+). It functions in the pathway amino-acid biosynthesis; L-lysine biosynthesis via DAP pathway; LL-2,6-diaminopimelate from (S)-tetrahydrodipicolinate (aminotransferase route): step 1/1. Its function is as follows. Involved in the synthesis of meso-diaminopimelate (m-DAP or DL-DAP), required for both lysine and peptidoglycan biosynthesis. Catalyzes the direct conversion of tetrahydrodipicolinate to LL-diaminopimelate. This Lachnoclostridium phytofermentans (strain ATCC 700394 / DSM 18823 / ISDg) (Clostridium phytofermentans) protein is LL-diaminopimelate aminotransferase.